The following is a 1476-amino-acid chain: ABC-type transporter frbG (1476 aa).

5 helical membrane-spanning segments follow: residues 26-46 (LLFE…VLAL), 64-84 (LYYA…VQLI), 97-117 (SIAI…LCHL), 122-142 (SAKP…FDII), and 146-166 (TLWI…GLVL). Residue Asn244 is glycosylated (N-linked (GlcNAc...) asparagine). The next 4 helical transmembrane spans lie at 266-286 (FLAG…QPFL), 302-322 (AGAT…GIAI), 380-400 (LQTM…TWLL), and 409-429 (IPSV…AVMA). The 280-residue stretch at 274–553 (LALTGFTFAQ…FVHSAVNLML (280 aa)) folds into the ABC transmembrane type-1 1 domain. Asn464 is a glycosylation site (N-linked (GlcNAc...) asparagine). The next 2 helical transmembrane spans lie at 487–507 (CLVF…IIGF) and 533–553 (IFAL…NLML). The region spanning 619 to 845 (IQARDTNIGW…VTAHVHNQTS (227 aa)) is the ABC transporter 1 domain. An ATP-binding site is contributed by 652 to 659 (GPTNSGKS). 4 N-linked (GlcNAc...) asparagine glycosylation sites follow: Asn694, Asn776, Asn805, and Asn842. 5 helical membrane passes run 898–918 (AVFL…SIWV), 936–956 (YLLV…GGGS), 1017–1037 (LFAF…SPFV), 1121–1141 (LGLV…IVIV), and 1151–1171 (GFLG…GGFI). Positions 898–1179 (AVFLALCMAL…FIGGWTGLET (282 aa)) constitute an ABC transmembrane type-1 2 domain. In terms of domain architecture, ABC transporter 2 spans 1216–1447 (IVFDDVTASY…LSSSSPTSSP (232 aa)). A glycan (N-linked (GlcNAc...) asparagine) is linked at Asn1235. Residue 1250-1257 (GRTGSGKS) participates in ATP binding.

It belongs to the ABC transporter superfamily. ABCC family. Conjugate transporter (TC 3.A.1.208) subfamily.

It is found in the cell membrane. In terms of biological role, ABC-type transporter; part of the gene cluster that mediates the biosynthesis of the antifungal antibiotic FR901469, an inhibitor of beta-1,3-glucansynthase, exerting antifungal activity against the pathogenes Candida albicans and Aspergillus fumigatus. FR901469 is a cyclic depsipeptide containing 12 amino acid residues and a fatty acid chain. Probably involved in the secretion of FR901469. The chain is ABC-type transporter frbG from Dothideomycetidae sp. (strain 11243) (Fungal sp. (strain No.11243)).